The chain runs to 298 residues: GTP cyclohydrolase FolE2 (298 aa).

This sequence belongs to the GTP cyclohydrolase IV family.

It catalyses the reaction GTP + H2O = 7,8-dihydroneopterin 3'-triphosphate + formate + H(+). Its pathway is cofactor biosynthesis; 7,8-dihydroneopterin triphosphate biosynthesis; 7,8-dihydroneopterin triphosphate from GTP: step 1/1. Functionally, converts GTP to 7,8-dihydroneopterin triphosphate. This is GTP cyclohydrolase FolE2 from Neisseria meningitidis serogroup A / serotype 4A (strain DSM 15465 / Z2491).